Here is a 147-residue protein sequence, read N- to C-terminus: Shadow of prion protein (147 aa).

The signal sequence occupies residues 1 to 24; that stretch reads MNWTTATCWALLLATAFLCDSCSA. Residues 26–43 are compositionally biased toward gly residues; it reads GGRGGARGSARGVRGGAR. The interval 26-46 is disordered; the sequence is GGRGGARGSARGVRGGARGAS. Residue asparagine 107 is glycosylated (N-linked (GlcNAc...) asparagine). Glycine 122 carries the GPI-anchor amidated glycine lipid modification. Residues 123 to 147 constitute a propeptide, removed in mature form; that stretch reads SGSVHSPRICLLLSGTLGALELLRP.

Belongs to the SPRN family. In terms of processing, N-glycosylated. As to expression, almost exclusively expressed in brain, with weak expression in lung and stomach.

It localises to the cell membrane. Functionally, prion-like protein that has PrP(C)-like neuroprotective activity. May act as a modulator for the biological actions of normal and abnormal PrP. The sequence is that of Shadow of prion protein (Sprn) from Rattus norvegicus (Rat).